The following is a 194-amino-acid chain: MFEYLKGTVADILIDKIIVEVNGIGYRIHSTIHSVSQIKKGDAITVYTHLVVREDELSLYGFMSIEELDMFQKLISVSKIGPKVASGILSAYTPNKLSAYILSKDISALSKAPGVGKKTAERIILELKDKVDKTNVVYDYTLFNDDHKDDDEAVQALMALGYSKLESEKAVEAVRDMSLGTEDVIKRALKWLMK.

Residues 1–63 form a domain I region; sequence MFEYLKGTVA…EDELSLYGFM (63 aa). The tract at residues 64–142 is domain II; sequence SIEELDMFQK…KTNVVYDYTL (79 aa). The segment at 143–151 is flexible linker; that stretch reads FNDDHKDDD. The domain III stretch occupies residues 151-194; it reads DEAVQALMALGYSKLESEKAVEAVRDMSLGTEDVIKRALKWLMK.

This sequence belongs to the RuvA family. As to quaternary structure, homotetramer. Forms an RuvA(8)-RuvB(12)-Holliday junction (HJ) complex. HJ DNA is sandwiched between 2 RuvA tetramers; dsDNA enters through RuvA and exits via RuvB. An RuvB hexamer assembles on each DNA strand where it exits the tetramer. Each RuvB hexamer is contacted by two RuvA subunits (via domain III) on 2 adjacent RuvB subunits; this complex drives branch migration. In the full resolvosome a probable DNA-RuvA(4)-RuvB(12)-RuvC(2) complex forms which resolves the HJ.

It is found in the cytoplasm. Functionally, the RuvA-RuvB-RuvC complex processes Holliday junction (HJ) DNA during genetic recombination and DNA repair, while the RuvA-RuvB complex plays an important role in the rescue of blocked DNA replication forks via replication fork reversal (RFR). RuvA specifically binds to HJ cruciform DNA, conferring on it an open structure. The RuvB hexamer acts as an ATP-dependent pump, pulling dsDNA into and through the RuvAB complex. HJ branch migration allows RuvC to scan DNA until it finds its consensus sequence, where it cleaves and resolves the cruciform DNA. The chain is Holliday junction branch migration complex subunit RuvA from Alkaliphilus oremlandii (strain OhILAs) (Clostridium oremlandii (strain OhILAs)).